The primary structure comprises 100 residues: Urease subunit gamma (100 aa).

The protein belongs to the urease gamma subunit family. As to quaternary structure, heterotrimer of UreA (gamma), UreB (beta) and UreC (alpha) subunits. Three heterotrimers associate to form the active enzyme.

It is found in the cytoplasm. The enzyme catalyses urea + 2 H2O + H(+) = hydrogencarbonate + 2 NH4(+). The protein operates within nitrogen metabolism; urea degradation; CO(2) and NH(3) from urea (urease route): step 1/1. The chain is Urease subunit gamma from Edwardsiella ictaluri (strain 93-146).